The following is a 335-amino-acid chain: COP9 signalosome complex subunit 5 (335 aa).

An MPN domain is found at V51 to D187. Residues H134, H136, and D147 each coordinate Zn(2+). The short motif at H134–D147 is the JAMM motif element.

Belongs to the peptidase M67A family. CSN5 subfamily. Component of the COP9 signalosome (CSN) complex.

The protein localises to the cytoplasm. The protein resides in the nucleus. Its function is as follows. Catalytic component of the COP9 signalosome (CSN) complex that acts as an regulator of the ubiquitin (Ubl) conjugation pathway by mediating the deneddylation of the cullin subunit of SCF-type E3 ubiquitin-protein ligase complexes. The CSN complex seems to link protein degradation to sexual development. Required for fruit body formation. The protein is COP9 signalosome complex subunit 5 (rri1) of Emericella nidulans (strain FGSC A4 / ATCC 38163 / CBS 112.46 / NRRL 194 / M139) (Aspergillus nidulans).